The following is a 144-amino-acid chain: MEQTFAYYTTIFREDFTLFCKSELQKEGISLGLLYFVIYIGKKPGCSQRELAAAVRADEGYAARSVEKLLQDGFIERRRHEKDKRMAILTLTMKGEKTFEKAHSLFHEWDDKVLSSLQEEEKKQLFTLLQKLGKTKEAHLCMKK.

Residues 1–134 enclose the HTH marR-type domain; that stretch reads MEQTFAYYTT…LFTLLQKLGK (134 aa). The H-T-H motif DNA-binding region spans 48-71; the sequence is QRELAAAVRADEGYAARSVEKLLQ.

In terms of biological role, transcription regulator that regulates expression of the bilirubin reductase operon (bilQ, bilR and bilS). This chain is HTH-type transcriptional regulator BilQ, found in Clostridium symbiosum (strain WAL-14163).